The following is a 248-amino-acid chain: Probable transcriptional regulatory protein blr1534 (248 aa).

Residues 1-21 (MAGHSQFKNIMHRKGRQDAQK) form a disordered region.

It belongs to the TACO1 family.

Its subcellular location is the cytoplasm. The chain is Probable transcriptional regulatory protein blr1534 from Bradyrhizobium diazoefficiens (strain JCM 10833 / BCRC 13528 / IAM 13628 / NBRC 14792 / USDA 110).